The sequence spans 145 residues: D-aminoacyl-tRNA deacylase (145 aa).

The short motif at 137 to 138 (GP) is the Gly-cisPro motif, important for rejection of L-amino acids element.

This sequence belongs to the DTD family. As to quaternary structure, homodimer.

It localises to the cytoplasm. It carries out the reaction glycyl-tRNA(Ala) + H2O = tRNA(Ala) + glycine + H(+). It catalyses the reaction a D-aminoacyl-tRNA + H2O = a tRNA + a D-alpha-amino acid + H(+). Functionally, an aminoacyl-tRNA editing enzyme that deacylates mischarged D-aminoacyl-tRNAs. Also deacylates mischarged glycyl-tRNA(Ala), protecting cells against glycine mischarging by AlaRS. Acts via tRNA-based rather than protein-based catalysis; rejects L-amino acids rather than detecting D-amino acids in the active site. By recycling D-aminoacyl-tRNA to D-amino acids and free tRNA molecules, this enzyme counteracts the toxicity associated with the formation of D-aminoacyl-tRNA entities in vivo and helps enforce protein L-homochirality. In Methylacidiphilum infernorum (isolate V4) (Methylokorus infernorum (strain V4)), this protein is D-aminoacyl-tRNA deacylase.